A 265-amino-acid polypeptide reads, in one-letter code: 3-methyl-2-oxobutanoate hydroxymethyltransferase (265 aa).

Residues D43 and D82 each contribute to the Mg(2+) site. 3-methyl-2-oxobutanoate contacts are provided by residues D43–S44, D82, and K111. E113 provides a ligand contact to Mg(2+). The active-site Proton acceptor is the E180.

Belongs to the PanB family. As to quaternary structure, homodecamer; pentamer of dimers. Requires Mg(2+) as cofactor.

The protein localises to the cytoplasm. It catalyses the reaction 3-methyl-2-oxobutanoate + (6R)-5,10-methylene-5,6,7,8-tetrahydrofolate + H2O = 2-dehydropantoate + (6S)-5,6,7,8-tetrahydrofolate. Its pathway is cofactor biosynthesis; (R)-pantothenate biosynthesis; (R)-pantoate from 3-methyl-2-oxobutanoate: step 1/2. In terms of biological role, catalyzes the reversible reaction in which hydroxymethyl group from 5,10-methylenetetrahydrofolate is transferred onto alpha-ketoisovalerate to form ketopantoate. The chain is 3-methyl-2-oxobutanoate hydroxymethyltransferase from Francisella tularensis subsp. holarctica (strain OSU18).